Here is a 151-residue protein sequence, read N- to C-terminus: Deoxyuridine 5'-triphosphate nucleotidohydrolase (151 aa).

Residues 70–72 (RSG), Asn83, 87–89 (LID), and Met97 contribute to the substrate site.

It belongs to the dUTPase family. Mg(2+) is required as a cofactor.

The catalysed reaction is dUTP + H2O = dUMP + diphosphate + H(+). Its pathway is pyrimidine metabolism; dUMP biosynthesis; dUMP from dCTP (dUTP route): step 2/2. This enzyme is involved in nucleotide metabolism: it produces dUMP, the immediate precursor of thymidine nucleotides and it decreases the intracellular concentration of dUTP so that uracil cannot be incorporated into DNA. In Haemophilus influenzae (strain 86-028NP), this protein is Deoxyuridine 5'-triphosphate nucleotidohydrolase.